The chain runs to 576 residues: MKLKKPSLPSSLLCAVPPCLSQIRLLIPRRVRVSSSTFANAKLVTLRNHTVNLHIYYCSMAGTDNRRSRHDDESPKNPNKKKKGNRNPEKSLLINLHSCSKRKDLSAALALYDAAITSSDIRLNQQHFQSLLYLCSAFISDPSLQTVAIDRGFQIFDRMVSSGISPNESSVTAVARLAAAKGDGDYAFKLVKDLVAVGGVSVPRLRTYAPALLCFCDTLEAEKGYEVEDHMDASGIVLEEAEISALLKVSAATGRENKVYRYLQKLRECVGCVSEETSKAIEEWFYGVKASEVSDNGIGSDIELLRAAVLKNGGGWHGLGWVGEGKWIVKKGNVSSAGKCLSCDEHLACVDTNEVETEDFVNSLVTLAMERKAKMNSCEPMADFSEFQEWLEKHGDYEAILDGANIGLYQQNFADGGFSLPQLEAVVKELYNKSGSKKQPLILLHKKRVNALLENPNHRNLVEEWINNNVLYATPPGSNDDWYWLYAAAKLKCLLVTNDEMRDHIFELLSNSFFQKWKERHQVRFTFVKGCLKLEMPPPFSVVIQESEKGSWHVPITSQDKEESLRSWMCITRQSS.

The segment covering 65–75 has biased composition (basic and acidic residues); the sequence is NRRSRHDDESP. The segment at 65–88 is disordered; sequence NRRSRHDDESPKNPNKKKKGNRNP. PPR repeat units lie at residues 88 to 123, 129 to 166, 167 to 201, and 204 to 238; these read PEKSLLINLHSCSKRKDLSAALALYDAAITSSDIRL, QSLLYLCSAFISDPSLQTVAIDRGFQIFDRMVSSGISP, NESSVTAVARLAAAKGDGDYAFKLVKDLVAVGGVS, and RLRTYAPALLCFCDTLEAEKGYEVEDHMDASGIVL. The region spanning 335-570 is the PRORP domain; sequence SSAGKCLSCD…KEESLRSWMC (236 aa). C340 and C343 together coordinate Zn(2+). The Mn(2+) site is built by D402, D480, D481, and D499. Zn(2+)-binding residues include H553 and C570.

Belongs to the PPR family. P subfamily. It depends on Mg(2+) as a cofactor. Mn(2+) is required as a cofactor.

The protein localises to the nucleus. It carries out the reaction Endonucleolytic cleavage of RNA, removing 5'-extranucleotides from tRNA precursor.. In terms of biological role, endonuclease RNase P responsible for the 5' maturation of tRNA precursors. Also involved in the maturation of mRNA and small nucleolar RNA (snoRNA). This chain is Proteinaceous RNase P 3 (PRORP3), found in Arabidopsis thaliana (Mouse-ear cress).